The primary structure comprises 149 residues: Large ribosomal subunit protein uL15 (149 aa).

The disordered stretch occupies residues 1–64 (MVELHDLQPH…GQTPLYMRIP (64 aa)). The span at 31 to 40 (TAGRGHKGQK) shows a compositional bias: basic residues.

It belongs to the universal ribosomal protein uL15 family. As to quaternary structure, part of the 50S ribosomal subunit.

Functionally, binds to the 23S rRNA. The polypeptide is Large ribosomal subunit protein uL15 (Aquifex aeolicus (strain VF5)).